A 142-amino-acid chain; its full sequence is HTH-type transcriptional regulator LysM (142 aa).

Residues 6–69 (IDESDLKILE…ELENEIRAIV (64 aa)) enclose the HTH asnC-type domain. The segment at residues 25 to 44 (YTLIAKELKVSEAAIRKRIE) is a DNA-binding region (H-T-H motif).

In terms of assembly, homotetramer.

The protein localises to the cytoplasm. The protein operates within amino-acid biosynthesis; L-lysine biosynthesis via AAA pathway [regulation]. In the absence or at low concentrations of lysine, activates the biosynthesis of this amino acid via the alpha-aminoadipate (AAA) pathway. This is HTH-type transcriptional regulator LysM (lysM) from Saccharolobus solfataricus (strain ATCC 35092 / DSM 1617 / JCM 11322 / P2) (Sulfolobus solfataricus).